A 346-amino-acid polypeptide reads, in one-letter code: Protein RecA (346 aa).

65–72 (GPESSGKT) contacts ATP.

This sequence belongs to the RecA family.

The protein resides in the cytoplasm. Can catalyze the hydrolysis of ATP in the presence of single-stranded DNA, the ATP-dependent uptake of single-stranded DNA by duplex DNA, and the ATP-dependent hybridization of homologous single-stranded DNAs. It interacts with LexA causing its activation and leading to its autocatalytic cleavage. In Pseudomonas aeruginosa (strain UCBPP-PA14), this protein is Protein RecA.